The following is a 146-amino-acid chain: Large ribosomal subunit protein uL13 (146 aa).

The protein belongs to the universal ribosomal protein uL13 family. As to quaternary structure, part of the 50S ribosomal subunit.

Its function is as follows. This protein is one of the early assembly proteins of the 50S ribosomal subunit, although it is not seen to bind rRNA by itself. It is important during the early stages of 50S assembly. This Malacoplasma penetrans (strain HF-2) (Mycoplasma penetrans) protein is Large ribosomal subunit protein uL13.